A 1362-amino-acid polypeptide reads, in one-letter code: ATP-dependent RNA helicase dhx29 (1362 aa).

Positions Met1–His10 are enriched in basic residues. Residues Met1–Ser76 form a disordered region. Positions Gly18–Arg27 are enriched in low complexity. Positions Ala28–Lys41 are enriched in basic and acidic residues. Residues Ser66–Ser76 are compositionally biased toward low complexity. The stretch at Glu89–Asn109 forms a coiled coil. Disordered stretches follow at residues Gln182–Asn215 and Glu229–Glu257. The span at Gly231–Lys242 shows a compositional bias: acidic residues. Basic and acidic residues predominate over residues Glu243–Glu257. Positions Gln285 to His305 form a coiled coil. The segment at Val317–Leu336 is disordered. The region spanning Leu576–Ser749 is the Helicase ATP-binding domain. Gly589–Ser596 lines the ATP pocket. The DEAH box motif lies at Asp696–His699. The 170-residue stretch at Asp852–Asp1021 folds into the Helicase C-terminal domain.

This sequence belongs to the DEAD box helicase family. DEAH subfamily. In terms of assembly, part of the 43S pre-initiation complex (PIC).

It localises to the cytoplasm. The catalysed reaction is ATP + H2O = ADP + phosphate + H(+). Functionally, ATP-binding RNA helicase involved in translation initiation. Part of the 43S pre-initiation complex that is required for efficient initiation on mRNAs of higher eukaryotes with structured 5'-UTRs by promoting efficient NTPase-dependent 48S complex formation. Specifically binds to the 40S ribosome near the mRNA entrance. Does not possess a processive helicase activity. The sequence is that of ATP-dependent RNA helicase dhx29 from Xenopus laevis (African clawed frog).